The primary structure comprises 269 residues: Energy-coupling factor transporter ATP-binding protein EcfA1 (269 aa).

Residues Ile8–Asp242 form the ABC transporter domain. Gly42 to Ser49 contacts ATP.

Belongs to the ABC transporter superfamily. Energy-coupling factor EcfA family. In terms of assembly, forms a stable energy-coupling factor (ECF) transporter complex composed of 2 membrane-embedded substrate-binding proteins (S component), 2 ATP-binding proteins (A component) and 2 transmembrane proteins (T component).

The protein resides in the cell membrane. ATP-binding (A) component of a common energy-coupling factor (ECF) ABC-transporter complex. Unlike classic ABC transporters this ECF transporter provides the energy necessary to transport a number of different substrates. In Staphylococcus epidermidis (strain ATCC 35984 / DSM 28319 / BCRC 17069 / CCUG 31568 / BM 3577 / RP62A), this protein is Energy-coupling factor transporter ATP-binding protein EcfA1.